A 252-amino-acid polypeptide reads, in one-letter code: Vacuolar-sorting protein dot2 (252 aa).

The protein belongs to the SNF8 family. Component of the endosomal sorting complex required for transport II (ESCRT-II).

It is found in the cytoplasm. It localises to the nucleus. Its subcellular location is the endosome membrane. Its function is as follows. Component of the endosomal sorting complex required for transport II (ESCRT-II), which is required for multivesicular body (MVB) formation and sorting of endosomal cargo proteins into MVBs. The MVB pathway mediates delivery of transmembrane proteins into the lumen of the lysosome for degradation. The ESCRT-II complex is probably involved in the recruitment of the ESCRT-III complex. Negatively regulates meiotic spindle pole body maturation via indirect regulation of the pcp1 gene. Required for efficient entry into pre-meiotic S phase. The polypeptide is Vacuolar-sorting protein dot2 (dot2) (Schizosaccharomyces pombe (strain 972 / ATCC 24843) (Fission yeast)).